Reading from the N-terminus, the 1941-residue chain is Xin actin-binding repeat-containing protein 1 (1941 aa).

The disordered stretch occupies residues 1–41; that stretch reads MAEPQKSSKVAIKKMEDDLPPPPIPDSIQVIAPASQDPNPL. Xin repeat units lie at residues 108-123, 143-158, 176-191, 215-230, 255-270, 293-308, 331-346, 368-383, 402-417, 439-454, 475-490, 510-525, 548-563, 586-601, 624-639, 658-673, 697-712, 736-751, 769-784, 805-820, 842-857, 880-895, 917-932, 951-966, 982-997, 1020-1035, and 1055-1070; these read GEVQ…WALD, GDVK…QSVN, GDVH…QPLD, GDVK…QSLD, GDVK…EPLC, NAVR…QPLD, PDVS…QPLD, ADVT…QALD, GDVK…QPME, GDVK…CPLG, GDVK…LPLD, GNVK…TPLY, GDVK…RPLD, GDVR…QPMD, GDVK…QPMH, ADVK…QPLD, VDVK…EPLG, GEVS…KPLD, GSVH…YPMD, GDVG…YSLD, ANVK…QPLY, GDVK…KPLD, GDVQ…EPLD, GDVQ…QQVG, GDVR…QPVD, GDVK…QPMD, and ADVK…TPLD. A compositionally biased stretch (polar residues) spans 1514–1565; it reads ASKQETKTLQSTIHQQESASTMRENTSTAIRTSTTRVQEASRTHTSVSQKSI. 3 disordered regions span residues 1514–1568, 1715–1856, and 1914–1941; these read ASKQ…IASH, ASGS…PPPA, and YKAR…GEVG. A compositionally biased stretch (low complexity) spans 1820–1833; it reads SASTNNSTNRSTKS. The segment covering 1834-1843 has biased composition (pro residues); sequence VPPPVPPKPP.

It belongs to the Xin family. In terms of tissue distribution, expressed at intercalated disks in the heart (at protein level).

The protein resides in the cell junction. It is found in the adherens junction. Its subcellular location is the desmosome. Involved in cardiac morphogenesis, including heart midline formation, cardiac tubule looping, myocardial formation and maintenance of heart beat speed and rhythm. May protect actin filaments from depolymerization. May play a role in development of normal skeletal muscle morphology, muscle fiber type composition and regulation of muscle satellite cell activation and survival. The protein is Xin actin-binding repeat-containing protein 1 of Gallus gallus (Chicken).